The following is a 66-amino-acid chain: Gallinacin-5 (66 aa).

The first 19 residues, Met-1 to Pro-19, serve as a signal peptide directing secretion. The propeptide occupies Gly-20–Arg-25. 3 disulfide bridges follow: Cys-31-Cys-59, Cys-38-Cys-53, and Cys-43-Cys-60.

It belongs to the beta-defensin family. As to expression, strong expression in the tongue and bone marrow. Low expression in the esophagus, trachea, lung, brain and ovary. Expressed in the ovarian stroma, but not in the ovarian follicles.

The protein resides in the secreted. Its subcellular location is the cytoplasmic granule. Functionally, has bactericidal activity. The protein is Gallinacin-5 (GAL5) of Gallus gallus (Chicken).